Here is a 218-residue protein sequence, read N- to C-terminus: Outer-membrane lipoprotein LolB (218 aa).

Positions 1 to 24 (MNNLSYLTKIPLIWVLLSVTLLSA) are cleaved as a signal peptide. A lipid anchor (N-palmitoyl cysteine) is attached at Cys-25. Cys-25 carries S-diacylglycerol cysteine lipidation.

It belongs to the LolB family. As to quaternary structure, monomer.

It localises to the cell outer membrane. In terms of biological role, plays a critical role in the incorporation of lipoproteins in the outer membrane after they are released by the LolA protein. The polypeptide is Outer-membrane lipoprotein LolB (Shewanella sediminis (strain HAW-EB3)).